We begin with the raw amino-acid sequence, 303 residues long: D-alanine--D-alanine ligase (303 aa).

Residues 104–300 (KLLWNAVGLP…FEKLVERVLE (197 aa)) enclose the ATP-grasp domain. Position 132–187 (132–187 (IAKLSLPVFVKPSSEGSSVGVFKVKTKEELLPAITAALEFDTIVLVEEFLTGAEYS)) interacts with ATP. Positions 254, 267, and 269 each coordinate Mg(2+).

This sequence belongs to the D-alanine--D-alanine ligase family. Mg(2+) is required as a cofactor. Mn(2+) serves as cofactor.

It is found in the cytoplasm. It catalyses the reaction 2 D-alanine + ATP = D-alanyl-D-alanine + ADP + phosphate + H(+). It participates in cell wall biogenesis; peptidoglycan biosynthesis. In terms of biological role, cell wall formation. The chain is D-alanine--D-alanine ligase from Haemophilus ducreyi (strain 35000HP / ATCC 700724).